Reading from the N-terminus, the 340-residue chain is MTVQMEYEKDVKVAALDGKKIAVIGYGSQGHAHAQNLRDSGRDVIIGVRPGKSFDKAKEDGFDTYTVVEATKLADVIMILAPDEIQQELYEAEIAPNLEAGNAVGFAHGFNIHFEFIKVPADVDVFMCAPKGPGHLVRRTYEEGFGVPALYAVYQDATGNAKNIAMDWCKGVGAARVGLLETTYKEETEEDLFGEQAVLCGGLTALIEAGFEVLTEAGYAPELAYFEVLHEMKLIVDLIYEGGFKKMRQSISNTAEYGDYVSGPRVITEQVKENMKAVLADIQNGKFANDFVNDYKAGRPKLTAYREQAANLEIEKVGAELRKAMPFVGKNDDDAFKIYN.

Residues 3 to 182 (VQMEYEKDVK…GAARVGLLET (180 aa)) enclose the KARI N-terminal Rossmann domain. NADP(+)-binding positions include 26 to 29 (YGSQ), arginine 49, serine 53, and 83 to 86 (DEIQ). The active site involves histidine 108. Position 134 (glycine 134) interacts with NADP(+). A KARI C-terminal knotted domain is found at 183-328 (TYKEETEEDL…AELRKAMPFV (146 aa)). Mg(2+) is bound by residues aspartate 191, glutamate 195, glutamate 227, and glutamate 231. Serine 252 provides a ligand contact to substrate.

Belongs to the ketol-acid reductoisomerase family. The cofactor is Mg(2+).

The catalysed reaction is (2R)-2,3-dihydroxy-3-methylbutanoate + NADP(+) = (2S)-2-acetolactate + NADPH + H(+). The enzyme catalyses (2R,3R)-2,3-dihydroxy-3-methylpentanoate + NADP(+) = (S)-2-ethyl-2-hydroxy-3-oxobutanoate + NADPH + H(+). The protein operates within amino-acid biosynthesis; L-isoleucine biosynthesis; L-isoleucine from 2-oxobutanoate: step 2/4. It functions in the pathway amino-acid biosynthesis; L-valine biosynthesis; L-valine from pyruvate: step 2/4. Functionally, involved in the biosynthesis of branched-chain amino acids (BCAA). Catalyzes an alkyl-migration followed by a ketol-acid reduction of (S)-2-acetolactate (S2AL) to yield (R)-2,3-dihydroxy-isovalerate. In the isomerase reaction, S2AL is rearranged via a Mg-dependent methyl migration to produce 3-hydroxy-3-methyl-2-ketobutyrate (HMKB). In the reductase reaction, this 2-ketoacid undergoes a metal-dependent reduction by NADPH to yield (R)-2,3-dihydroxy-isovalerate. The protein is Ketol-acid reductoisomerase (NADP(+)) of Streptococcus pneumoniae (strain Hungary19A-6).